The following is a 142-amino-acid chain: Nucleoside diphosphate kinase (142 aa).

Positions 11, 59, 87, 93, 107, and 117 each coordinate ATP. H120 (pros-phosphohistidine intermediate) is an active-site residue.

It belongs to the NDK family. As to quaternary structure, homotetramer. Requires Mg(2+) as cofactor.

The protein resides in the cytoplasm. It carries out the reaction a 2'-deoxyribonucleoside 5'-diphosphate + ATP = a 2'-deoxyribonucleoside 5'-triphosphate + ADP. The enzyme catalyses a ribonucleoside 5'-diphosphate + ATP = a ribonucleoside 5'-triphosphate + ADP. Its function is as follows. Major role in the synthesis of nucleoside triphosphates other than ATP. The ATP gamma phosphate is transferred to the NDP beta phosphate via a ping-pong mechanism, using a phosphorylated active-site intermediate. The sequence is that of Nucleoside diphosphate kinase from Aquifex aeolicus (strain VF5).